Consider the following 279-residue polypeptide: Gas vesicle protein L2 (279 aa).

It belongs to the gas vesicle GvpF/GvpL family. In terms of assembly, gvpF to GvpM interact with each other in vitro, and may form multi-subunit complex(es). Interacts with GvpC, GvpN and GvpO.

It is found in the gas vesicle. Proteins GvpF to GvpM might be involved in nucleating gas vesicle formation. A minor component of the gas vesicle. Gas vesicles are hollow, gas filled proteinaceous nanostructures found in several microbial planktonic microorganisms. They allow positioning of halobacteria at the optimal depth for growth in the poorly aerated, shallow brine pools of their habitat. In terms of biological role, expression of 2 c-vac DNA fragments containing 2 divergently transcribed regions (gvpE-gvpF-gvpG-gvpH-gvpI-gvpJ-gvpK-gvpL-gvpM and gvpA-gvpC-gvpN-gvpO) allows H.volcanii to produce gas vesicles. The protein is Gas vesicle protein L2 of Halobacterium salinarum (strain ATCC 700922 / JCM 11081 / NRC-1) (Halobacterium halobium).